A 345-amino-acid polypeptide reads, in one-letter code: S-adenosylmethionine:tRNA ribosyltransferase-isomerase (345 aa).

This sequence belongs to the QueA family. In terms of assembly, monomer.

It is found in the cytoplasm. It carries out the reaction 7-aminomethyl-7-carbaguanosine(34) in tRNA + S-adenosyl-L-methionine = epoxyqueuosine(34) in tRNA + adenine + L-methionine + 2 H(+). It participates in tRNA modification; tRNA-queuosine biosynthesis. Its function is as follows. Transfers and isomerizes the ribose moiety from AdoMet to the 7-aminomethyl group of 7-deazaguanine (preQ1-tRNA) to give epoxyqueuosine (oQ-tRNA). The chain is S-adenosylmethionine:tRNA ribosyltransferase-isomerase from Thermodesulfovibrio yellowstonii (strain ATCC 51303 / DSM 11347 / YP87).